The primary structure comprises 176 residues: RNA pyrophosphohydrolase (176 aa).

The 144-residue stretch at Gly-6 to Lys-149 folds into the Nudix hydrolase domain. Residues Gly-38–Gly-59 carry the Nudix box motif.

Belongs to the Nudix hydrolase family. RppH subfamily. Requires a divalent metal cation as cofactor.

Functionally, accelerates the degradation of transcripts by removing pyrophosphate from the 5'-end of triphosphorylated RNA, leading to a more labile monophosphorylated state that can stimulate subsequent ribonuclease cleavage. This is RNA pyrophosphohydrolase from Shigella dysenteriae serotype 1 (strain Sd197).